A 313-amino-acid polypeptide reads, in one-letter code: Ubiquitin-conjugating enzyme E2 Z (313 aa).

Positions 58-212 (QCVLRIKRDI…IRHETIRVAV (155 aa)) constitute a UBC core domain. Residue Cys-147 is the Glycyl thioester intermediate of the active site. Positions 283-313 (VREKHRKETVDIDSDSSSSETETDTQGSSNP) are disordered. Positions 297-313 (DSSSSETETDTQGSSNP) are enriched in low complexity.

This sequence belongs to the ubiquitin-conjugating enzyme family.

It is found in the cytoplasm. It localises to the nucleus. It catalyses the reaction S-ubiquitinyl-[E1 ubiquitin-activating enzyme]-L-cysteine + [E2 ubiquitin-conjugating enzyme]-L-cysteine = [E1 ubiquitin-activating enzyme]-L-cysteine + S-ubiquitinyl-[E2 ubiquitin-conjugating enzyme]-L-cysteine.. The protein operates within protein modification; protein ubiquitination. Its function is as follows. Catalyzes the covalent attachment of ubiquitin to other proteins. May be involved in apoptosis regulation. The sequence is that of Ubiquitin-conjugating enzyme E2 Z (ube2z) from Xenopus tropicalis (Western clawed frog).